The following is a 946-amino-acid chain: Serine/threonine-protein kinase PLK4 (946 aa).

The region spanning 12–265 is the Protein kinase domain; it reads FKVLNLLGKG…LSSVLDHAFM (254 aa). Residues 18 to 26 and Lys-41 contribute to the ATP site; that span reads LGKGSFACV. The Proton acceptor role is filled by Asp-136. Residues 330–395 form a disordered region; sequence HPAERSNGGS…TYGKPSSFSE (66 aa). A compositionally biased stretch (polar residues) spans 378-394; sequence RSGTSQSQTYGKPSSFS. In terms of domain architecture, Cryptic POLO box 1 (CPB1) spans 566 to 679; the sequence is TLRSIISPLN…AKFIQLVRSK (114 aa). The Cryptic POLO box 2 (CPB2) domain occupies 680-792; sequence MPKVTYYTRY…GRRPAITESP (113 aa). Positions 789-828 are disordered; sequence TESPRTQLTVDSARERKDEQSSANRVLHSSATSPPQIPNI. Residues 809-828 show a composition bias toward polar residues; sequence SSANRVLHSSATSPPQIPNI. Residues 864–942 enclose the POLO box domain; sequence QVLKSVFVEN…LSSILMLFAS (79 aa).

It belongs to the protein kinase superfamily. Ser/Thr protein kinase family. CDC5/Polo subfamily. As to quaternary structure, homodimer. In terms of processing, ubiquitinated; leading to its degradation by the proteasome.

The protein resides in the cytoplasm. Its subcellular location is the cytoskeleton. It localises to the microtubule organizing center. It is found in the centrosome. The protein localises to the centriole. The enzyme catalyses L-seryl-[protein] + ATP = O-phospho-L-seryl-[protein] + ADP + H(+). The catalysed reaction is L-threonyl-[protein] + ATP = O-phospho-L-threonyl-[protein] + ADP + H(+). Functionally, serine/threonine-protein kinase that plays a central role in centriole duplication. Able to trigger procentriole formation on the surface of the parental centriole cylinder, leading to the recruitment of centriole biogenesis proteins such as sass6, cpap, ccp110, cep135 and gamma-tubulin. When overexpressed, it is able to induce centrosome amplification through the simultaneous generation of multiple procentrioles adjoining each parental centriole during S phase. Its central role in centriole replication suggests a possible role in tumorigenesis, centrosome aberrations being frequently observed in tumors. Also involved in deuterosome-mediated centriole amplification in multiciliated that can generate more than 100 centrioles. The sequence is that of Serine/threonine-protein kinase PLK4 from Xenopus tropicalis (Western clawed frog).